We begin with the raw amino-acid sequence, 495 residues long: Oxidoreductase AflY (495 aa).

The interval 1–22 (MGSHAPAVAGKPDPKKGPYQAT) is disordered.

The protein belongs to the questin oxidase family.

It participates in mycotoxin biosynthesis; aflatoxin biosynthesis. Its function is as follows. Oxidoreductase; part of the gene cluster that mediates the biosynthesis of aflatoxins, a group of polyketide-derived furanocoumarins, and part of the most toxic and carcinogenic compounds among the known mycotoxins. The four major aflatoxins produced by A.parasiticus are aflatoxin B1 (AFB1), aflatoxin B2 (AFB2), aflatoxin G1 (AFG1) and aflatoxin G2 (AFG2). Within the aflatoxin pathway, the oxidoreductase aflY seems to be involved in the conversion of versicolorin A (VERA) to demethylsterigmatocystin (DMST), through probable Baeyer-Villiger oxidation required for the formation of the xanthone ring. The biosynthesis of aflatoxins begins with the norsolorinic acid synthase aflC that combines a hexanoyl starter unit produced by the fatty acid synthase aflA/aflB and 7 malonyl-CoA extender units to synthesize the precursor NOR. The second step is the conversion of NOR to averantin and requires the norsolorinic acid ketoreductase aflD, which catalyzes the dehydration of norsolorinic acid to form (1'S)-averantin. The norsolorinic acid reductases aflE and aflF may also play a role in the conversion of NOR to AVN. The cytochrome P450 monooxygenase aflG then catalyzes the hydroxylation of AVN to 5'hydroxyaverantin (HAVN). The next step is performed by the 5'-hydroxyaverantin dehydrogenase aflH that transforms HAVN to 5'-oxoaverantin (OAVN) which is further converted to averufin (AVF) by aflK that plays a dual role in the pathway, as a 5'-oxoaverantin cyclase that mediates conversion of 5'-oxoaverantin, as well as a versicolorin B synthase in a later step in the pathway. The averufin oxidase aflI catalyzes the conversion of AVF to versiconal hemiacetal acetate (VHA). VHA is then the substrate for the versiconal hemiacetal acetate esterase aflJ to yield versiconal (VAL). Versicolorin B synthase aflK then converts VAL to versicolorin B (VERB) by closing the bisfuran ring of aflatoxin which is required for DNA-binding, thus giving to aflatoxin its activity as a mutagen. Then, the activity of the versicolorin B desaturase aflL leads to versicolorin A (VERA). A branch point starts from VERB since it can also be converted to dihydrodemethylsterigmatocystin (DMDHST), probably also by aflL, VERA being a precursor for aflatoxins B1 and G1, and DMDHST for aflatoxins B2 and G2. Next, the versicolorin reductase aflM and the cytochrome P450 monooxygenase aflN are involved in conversion of VERA to demethylsterigmatocystin (DMST). AflX and aflY seem also involved in this step, through probable aflX-mediated epoxide ring-opening step following versicolorin A oxidation and aflY-mediated Baeyer-Villiger oxidation required for the formation of the xanthone ring. The methyltransferase aflO then leads to the modification of DMST to sterigmatocystin (ST), and of DMDHST to dihydrosterigmatocystin (DHST). Both ST and DHST are then substrates of the O-methyltransferase aflP to yield O-methylsterigmatocystin (OMST) and dihydro-O-methylsterigmatocystin (DHOMST), respectively. Finally OMST is converted to aflatoxins B1 and G1, and DHOMST to aflatoxins B2 and G2, via the action of several enzymes including O-methylsterigmatocystin oxidoreductase aflQ, the cytochrome P450 monooxygenase aflU, but also the NADH-dependent flavin oxidoreductase nadA which is specifically required for the synthesis of AFG1. The polypeptide is Oxidoreductase AflY (Aspergillus parasiticus (strain ATCC 56775 / NRRL 5862 / SRRC 143 / SU-1)).